Consider the following 327-residue polypeptide: Phenylalanine--tRNA ligase alpha subunit (327 aa).

Glu-252 is a binding site for Mg(2+).

The protein belongs to the class-II aminoacyl-tRNA synthetase family. Phe-tRNA synthetase alpha subunit type 1 subfamily. As to quaternary structure, tetramer of two alpha and two beta subunits. Mg(2+) is required as a cofactor.

It localises to the cytoplasm. It carries out the reaction tRNA(Phe) + L-phenylalanine + ATP = L-phenylalanyl-tRNA(Phe) + AMP + diphosphate + H(+). This Shewanella amazonensis (strain ATCC BAA-1098 / SB2B) protein is Phenylalanine--tRNA ligase alpha subunit.